The sequence spans 185 residues: Ribosome-recycling factor (185 aa).

The protein belongs to the RRF family.

The protein resides in the cytoplasm. In terms of biological role, responsible for the release of ribosomes from messenger RNA at the termination of protein biosynthesis. May increase the efficiency of translation by recycling ribosomes from one round of translation to another. In Streptococcus pneumoniae serotype 19F (strain G54), this protein is Ribosome-recycling factor.